The primary structure comprises 473 residues: Argininosuccinate lyase (473 aa).

It belongs to the lyase 1 family. Argininosuccinate lyase subfamily.

It is found in the cytoplasm. It catalyses the reaction 2-(N(omega)-L-arginino)succinate = fumarate + L-arginine. It functions in the pathway amino-acid biosynthesis; L-arginine biosynthesis; L-arginine from L-ornithine and carbamoyl phosphate: step 3/3. The sequence is that of Argininosuccinate lyase from Streptomyces clavuligerus.